A 177-amino-acid chain; its full sequence is Large ribosomal subunit protein uL6 (177 aa).

The protein belongs to the universal ribosomal protein uL6 family. Part of the 50S ribosomal subunit.

Its function is as follows. This protein binds to the 23S rRNA, and is important in its secondary structure. It is located near the subunit interface in the base of the L7/L12 stalk, and near the tRNA binding site of the peptidyltransferase center. In Shewanella amazonensis (strain ATCC BAA-1098 / SB2B), this protein is Large ribosomal subunit protein uL6.